The primary structure comprises 599 residues: Dictomallein-2 (599 aa).

The signal sequence occupies residues 1-20 (MKLILIYLILVFNLFNFINC). A Peptidase M66 domain is found at 145–407 (PDVGQDYTLK…QNYFKNSIYY (263 aa)). Position 298 (His298) interacts with Zn(2+). Residue Glu299 is part of the active site. Residues His302 and His308 each coordinate Zn(2+).

Belongs to the dictomallein family. Zn(2+) is required as a cofactor.

It is found in the secreted. This is Dictomallein-2 (dtmlB) from Dictyostelium discoideum (Social amoeba).